The primary structure comprises 303 residues: Acetylglutamate kinase (303 aa).

Substrate-binding positions include 76-77 (GG), arginine 98, and asparagine 199.

This sequence belongs to the acetylglutamate kinase family. ArgB subfamily.

It localises to the cytoplasm. The catalysed reaction is N-acetyl-L-glutamate + ATP = N-acetyl-L-glutamyl 5-phosphate + ADP. It functions in the pathway amino-acid biosynthesis; L-arginine biosynthesis; N(2)-acetyl-L-ornithine from L-glutamate: step 2/4. In terms of biological role, catalyzes the ATP-dependent phosphorylation of N-acetyl-L-glutamate. The sequence is that of Acetylglutamate kinase from Clavibacter sepedonicus (Clavibacter michiganensis subsp. sepedonicus).